The chain runs to 337 residues: Heat-inducible transcription repressor HrcA (337 aa).

The protein belongs to the HrcA family.

Functionally, negative regulator of class I heat shock genes (grpE-dnaK-dnaJ and groELS operons). Prevents heat-shock induction of these operons. The polypeptide is Heat-inducible transcription repressor HrcA (Nocardioides sp. (strain ATCC BAA-499 / JS614)).